Reading from the N-terminus, the 691-residue chain is T-box transcription factor TBX2-B (691 aa).

The segment at residues 104–277 (LWDQFHKIGT…HNPFAKGFRD (174 aa)) is a DNA-binding region (T-box). 2 disordered regions span residues 301-440 (CKAD…SLSK) and 612-691 (NLLT…ESPK). Over residues 325–335 (HSPLSAAPSPL) the composition is skewed to low complexity. Composition is skewed to basic and acidic residues over residues 340–361 (TNRE…EVRS), 378–402 (RLED…RKDG), and 415–433 (SLEK…KSDP). Over residues 624–639 (PGSESSKPGSSRESSP) the composition is skewed to low complexity. The stretch at 659 to 684 (SMKDSINELQRIQRLVSGLERQREVS) forms a coiled coil. Residues 678–691 (ERQREVSPGRESPK) show a composition bias toward basic and acidic residues.

Binds DNA as a monomer.

Its subcellular location is the nucleus. Its function is as follows. Transcription factor which acts as a transcriptional repressor. May also function as a transcriptional activator. Binds to the palindromic T site 5'-TTCACACCTAGGTGTGAA-3' DNA sequence, or a half-site, which are present in the regulatory region of several genes. The protein is T-box transcription factor TBX2-B (tbx2-b) of Xenopus laevis (African clawed frog).